The primary structure comprises 436 residues: UDP-N-acetylglucosamine 1-carboxyvinyltransferase (436 aa).

A phosphoenolpyruvate-binding site is contributed by 22–23; that stretch reads KN. Arg96 is a binding site for UDP-N-acetyl-alpha-D-glucosamine. The active-site Proton donor is Cys120. Position 120 is a 2-(S-cysteinyl)pyruvic acid O-phosphothioketal (Cys120). UDP-N-acetyl-alpha-D-glucosamine contacts are provided by residues 125 to 129, Asp309, and Ile331; that span reads RPIDL.

Belongs to the EPSP synthase family. MurA subfamily.

It is found in the cytoplasm. It carries out the reaction phosphoenolpyruvate + UDP-N-acetyl-alpha-D-glucosamine = UDP-N-acetyl-3-O-(1-carboxyvinyl)-alpha-D-glucosamine + phosphate. It participates in cell wall biogenesis; peptidoglycan biosynthesis. Its function is as follows. Cell wall formation. Adds enolpyruvyl to UDP-N-acetylglucosamine. The protein is UDP-N-acetylglucosamine 1-carboxyvinyltransferase of Acidobacterium capsulatum (strain ATCC 51196 / DSM 11244 / BCRC 80197 / JCM 7670 / NBRC 15755 / NCIMB 13165 / 161).